A 332-amino-acid chain; its full sequence is Ornithine carbamoyltransferase, catabolic (332 aa).

Carbamoyl phosphate-binding positions include serine 60 to threonine 63, glutamine 87, arginine 111, and histidine 138 to glutamine 141. Residues asparagine 170, aspartate 230, and serine 234–methionine 235 contribute to the L-ornithine site. Carbamoyl phosphate contacts are provided by residues cysteine 271–leucine 272 and arginine 316.

Belongs to the aspartate/ornithine carbamoyltransferase superfamily. OTCase family.

The protein localises to the cytoplasm. The catalysed reaction is carbamoyl phosphate + L-ornithine = L-citrulline + phosphate + H(+). It participates in amino-acid degradation; L-arginine degradation via ADI pathway; carbamoyl phosphate from L-arginine: step 2/2. Functionally, reversibly catalyzes the transfer of the carbamoyl group from carbamoyl phosphate (CP) to the N(epsilon) atom of ornithine (ORN) to produce L-citrulline. In Bacillus thuringiensis subsp. konkukian (strain 97-27), this protein is Ornithine carbamoyltransferase, catabolic.